The sequence spans 172 residues: 16S rRNA aminocarboxypropyltransferase (172 aa).

S-adenosyl-L-methionine-binding residues include Thr-21, Leu-71, Leu-93, and Thr-112.

This sequence belongs to the TDD superfamily. TSR3 family.

It localises to the cytoplasm. It catalyses the reaction an N(1)-methylpseudouridine in rRNA + S-adenosyl-L-methionine = N(1)-methyl-N(3)-[(3S)-3-amino-3-carboxypropyl]pseudouridine in rRNA + S-methyl-5'-thioadenosine + H(+). In terms of biological role, aminocarboxypropyltransferase that catalyzes the aminocarboxypropyl transfer on pseudouridine at position 914 in 16S rRNA. It constitutes the last step in biosynthesis of the hypermodified N1-methyl-N3-(3-amino-3-carboxypropyl) pseudouridine (m1acp3-Psi). The chain is 16S rRNA aminocarboxypropyltransferase from Methanocaldococcus jannaschii (strain ATCC 43067 / DSM 2661 / JAL-1 / JCM 10045 / NBRC 100440) (Methanococcus jannaschii).